Reading from the N-terminus, the 285-residue chain is Protoheme IX farnesyltransferase (285 aa).

The next 9 membrane-spanning stretches (helical) occupy residues Leu13–Ala33, Leu40–Ile60, Glu89–Asn109, Ile110–Leu130, Leu137–Leu157, Gly165–Leu185, Ala194–Ile214, Ile230–Leu252, and Phe265–Ile285.

This sequence belongs to the UbiA prenyltransferase family. Protoheme IX farnesyltransferase subfamily.

The protein resides in the cell membrane. The enzyme catalyses heme b + (2E,6E)-farnesyl diphosphate + H2O = Fe(II)-heme o + diphosphate. Its pathway is porphyrin-containing compound metabolism; heme O biosynthesis; heme O from protoheme: step 1/1. Its function is as follows. Converts heme B (protoheme IX) to heme O by substitution of the vinyl group on carbon 2 of heme B porphyrin ring with a hydroxyethyl farnesyl side group. In Saccharolobus islandicus (strain Y.N.15.51 / Yellowstone #2) (Sulfolobus islandicus), this protein is Protoheme IX farnesyltransferase.